A 179-amino-acid polypeptide reads, in one-letter code: GTP-dependent dephospho-CoA kinase (179 aa).

D55, V57, D74, K76, and E128 together coordinate GTP.

It belongs to the GTP-dependent DPCK family.

It catalyses the reaction 3'-dephospho-CoA + GTP = GDP + CoA + H(+). It participates in cofactor biosynthesis; coenzyme A biosynthesis. Its function is as follows. Catalyzes the GTP-dependent phosphorylation of the 3'-hydroxyl group of dephosphocoenzyme A to form coenzyme A (CoA). The sequence is that of GTP-dependent dephospho-CoA kinase from Saccharolobus islandicus (strain M.16.4 / Kamchatka #3) (Sulfolobus islandicus).